The primary structure comprises 258 residues: Archaerhodopsin-3 (258 aa).

Residues 1-6 (MDPIAL) constitute a propeptide that is removed on maturation. Gln-7 carries the post-translational modification Pyrrolidone carboxylic acid. The Extracellular portion of the chain corresponds to 7 to 18 (QAGYDLLGDGRP). The chain crosses the membrane as a helical span at residues 19–40 (ETLWLGIGTLLMLIGTFYFLVR). At 41-49 (GWGVTDKDA) the chain is on the cytoplasmic side. The chain crosses the membrane as a helical span at residues 50–71 (REYYAVTILVPGIASAAYLSMF). Over 72-89 (FGIGLTEVTVGGEMLDIY) the chain is Extracellular. Residues 90–111 (YARYADWLFTTPLLLLDLALLA) traverse the membrane as a helical segment. The Cytoplasmic portion of the chain corresponds to 112-114 (KVD). The chain crosses the membrane as a helical span at residues 115–137 (RVTIGTLVGVDALMIVTGLIGAL). Over 138–141 (SHTA) the chain is Extracellular. A helical transmembrane segment spans residues 142-170 (IARYSWWLFSTICMIVVLYFLATSLRSAA). At 171-173 (KER) the chain is on the cytoplasmic side. Residues 174–202 (GPEVASTFNTLTALVLVLWTAYPILWIIG) form a helical membrane-spanning segment. The Extracellular portion of the chain corresponds to 203-210 (TEGAGVVG). A helical transmembrane segment spans residues 211–243 (LGIETLLFMVLDVTAKVGFGFILLRSRAILGDT). Lys-226 carries the N6-(retinylidene)lysine modification. Residues 244–258 (EAPEPSAGADVSAAD) lie on the Cytoplasmic side of the membrane.

It belongs to the archaeal/bacterial/fungal opsin family.

It localises to the cell membrane. Light-driven proton pump. The chain is Archaerhodopsin-3 (aop3) from Halorubrum sodomense.